The following is a 223-amino-acid chain: Endonuclease III (223 aa).

In terms of domain architecture, HhH spans 118 to 137 (RDFLTAIEGIGDKTADVVLL). [4Fe-4S] cluster contacts are provided by cysteine 198, cysteine 205, cysteine 208, and cysteine 214.

It belongs to the Nth/MutY family. [4Fe-4S] cluster is required as a cofactor.

The enzyme catalyses 2'-deoxyribonucleotide-(2'-deoxyribose 5'-phosphate)-2'-deoxyribonucleotide-DNA = a 3'-end 2'-deoxyribonucleotide-(2,3-dehydro-2,3-deoxyribose 5'-phosphate)-DNA + a 5'-end 5'-phospho-2'-deoxyribonucleoside-DNA + H(+). Its function is as follows. Probably part of a 4-gene DNA damage response locus in which the upstream ups system, in combination with this downstream locus, functions in homologous recombination to rescue Sulfolobales from DNA-damaging threats. DNA repair enzyme that has both DNA N-glycosylase activity and AP-lyase activity. The DNA N-glycosylase activity releases various damaged pyrimidines from DNA by cleaving the N-glycosidic bond, leaving an AP (apurinic/apyrimidinic) site. The AP-lyase activity cleaves the phosphodiester bond 3' to the AP site by a beta-elimination, leaving a 3'-terminal unsaturated sugar and a product with a terminal 5'-phosphate. Nicks UV-treated plasmid DNA in a dose-dependent manner, has no activity on untreated DNA. In Sulfolobus acidocaldarius (strain ATCC 33909 / DSM 639 / JCM 8929 / NBRC 15157 / NCIMB 11770), this protein is Endonuclease III.